Here is a 1249-residue protein sequence, read N- to C-terminus: Cell adhesion molecule-related/down-regulated by oncogenes (1249 aa).

A signal peptide spans 1–25; it reads MHSDPGPWHPLLCFLVLALSTSANS. Residues 26 to 957 are Extracellular-facing; the sequence is DVTPRFTSKP…PSHSPTRNGD (932 aa). Ig-like C2-type domains lie at 29–113, 120–212, 217–307, 314–400, and 406–517; these read PRFT…KSVS, NDFE…LKLS, PRVD…VYYT, PSVS…ATVH, and PVIV…AYLT. Disulfide bonds link C50/C98, C142/C192, and C244/C292. 5 N-linked (GlcNAc...) asparagine glycosylation sites follow: N181, N289, N296, N344, and N428. Cystine bridges form between C335/C382 and C427/C501. Disordered regions lie at residues 528–585 and 671–690; these read EDIT…SPPQ and TSKE…PPIG. Residues 545–566 are compositionally biased toward basic and acidic residues; it reads SETRVPDHSQINEHKPEPRVTE. 3 consecutive Fibronectin type-III domains span residues 577 to 675, 721 to 815, and 826 to 923; these read APII…SKER, APDR…VAGY, and GPRI…TKAR. N-linked (GlcNAc...) asparagine glycosylation is present at N870. Residues 929 to 952 are disordered; sequence SEYPVLDLSTPSVPDRSSSPSHSP. Positions 937–952 are enriched in low complexity; sequence STPSVPDRSSSPSHSP. The helical transmembrane segment at 958 to 978 threads the bilayer; that stretch reads FLYVIVGCVLGGMVLILLAFI. Over 979–1249 the chain is Cytoplasmic; that stretch reads AMCLLKNRQQ…DHPQLQTQEA (271 aa). A disordered region spans residues 1158–1202; the sequence is NCSEEIEEDQNEKETQLSANSVCPEEATQTGTEQHEGEDCTKTED. Positions 1159–1168 are enriched in acidic residues; that stretch reads CSEEIEEDQN. Over residues 1173 to 1189 the composition is skewed to polar residues; sequence QLSANSVCPEEATQTGT. Positions 1190–1202 are enriched in basic and acidic residues; the sequence is EQHEGEDCTKTED.

The protein resides in the cell membrane. Component of a cell-surface receptor complex that mediates cell-cell interactions between muscle precursor cells. Promotes differentiation of myogenic cells. The polypeptide is Cell adhesion molecule-related/down-regulated by oncogenes (cdon) (Xenopus laevis (African clawed frog)).